Reading from the N-terminus, the 182-residue chain is UPF0316 protein lp_1140 (182 aa).

Transmembrane regions (helical) follow at residues 1-21 (MHIDMGMLVLIFIINFAYITL), 36-56 (FAAFASVIEITIYVLGLSLVL), and 62-82 (PINLVVYALGYGVGVYVGMVI).

This sequence belongs to the UPF0316 family.

Its subcellular location is the cell membrane. The polypeptide is UPF0316 protein lp_1140 (Lactiplantibacillus plantarum (strain ATCC BAA-793 / NCIMB 8826 / WCFS1) (Lactobacillus plantarum)).